Reading from the N-terminus, the 152-residue chain is Ribosome maturation factor RimP (152 aa).

This sequence belongs to the RimP family.

Its subcellular location is the cytoplasm. Its function is as follows. Required for maturation of 30S ribosomal subunits. This chain is Ribosome maturation factor RimP, found in Aeromonas hydrophila subsp. hydrophila (strain ATCC 7966 / DSM 30187 / BCRC 13018 / CCUG 14551 / JCM 1027 / KCTC 2358 / NCIMB 9240 / NCTC 8049).